Reading from the N-terminus, the 315-residue chain is Ornithine carbamoyltransferase (315 aa).

Residues 53–56, Gln80, Arg104, and 131–134 contribute to the carbamoyl phosphate site; these read STRT and HPCQ. L-ornithine is bound by residues Asn163, Asp227, and 231–232; that span reads SM. Residues 267–268 and Arg295 contribute to the carbamoyl phosphate site; that span reads CL.

It belongs to the aspartate/ornithine carbamoyltransferase superfamily. OTCase family.

It is found in the cytoplasm. It catalyses the reaction carbamoyl phosphate + L-ornithine = L-citrulline + phosphate + H(+). It participates in amino-acid degradation; L-arginine degradation via ADI pathway; carbamoyl phosphate from L-arginine: step 2/2. Functionally, reversibly catalyzes the transfer of the carbamoyl group from carbamoyl phosphate (CP) to the N(epsilon) atom of ornithine (ORN) to produce L-citrulline. This chain is Ornithine carbamoyltransferase, found in Rhodococcus opacus (strain B4).